We begin with the raw amino-acid sequence, 394 residues long: Protein BUR2 (394 aa).

Disordered stretches follow at residues 1-32 (MVLSASEEIANSQPSGNGKTSLDIKQNEGNPQ) and 372-394 (MSERSIKRPSEPPAEQATKKPRF). Over residues 9 to 32 (IANSQPSGNGKTSLDIKQNEGNPQ) the composition is skewed to polar residues. A compositionally biased stretch (basic and acidic residues) spans 372–381 (MSERSIKRPS).

As to quaternary structure, belongs to the BUR kinase complex.

Its subcellular location is the nucleus. Component of the BUR kinase complex involved in transcription regulation. This complex phosphorylates the UBC2/RAD6 ubiquitin-conjugating enzyme (E2), leading to monoubiquitination of histone H2B and the silencing of telomeric-associated genes. Also required for histone H3 methylation. Necessary for the recovery from pheromone-induced growth arrest in the cell cycle G1 phase. The kinase activity of the complex requires the presence of BUR2. Overexpression of BUR2 interferes with mitotic chromosome segregation. This chain is Protein BUR2 (BUR2), found in Kluyveromyces lactis (strain ATCC 8585 / CBS 2359 / DSM 70799 / NBRC 1267 / NRRL Y-1140 / WM37) (Yeast).